The primary structure comprises 305 residues: Putative S-adenosyl-L-methionine-dependent methyltransferase MAB_4607c (305 aa).

S-adenosyl-L-methionine-binding positions include aspartate 128 and 155–156; that span reads DL.

Belongs to the UPF0677 family.

In terms of biological role, exhibits S-adenosyl-L-methionine-dependent methyltransferase activity. The protein is Putative S-adenosyl-L-methionine-dependent methyltransferase MAB_4607c of Mycobacteroides abscessus (strain ATCC 19977 / DSM 44196 / CCUG 20993 / CIP 104536 / JCM 13569 / NCTC 13031 / TMC 1543 / L948) (Mycobacterium abscessus).